We begin with the raw amino-acid sequence, 997 residues long: Protein Smaug (997 aa).

The segment covering 1–37 (MKYATGTDNAMTSGISGQTNNSNSASTEMQPTTSTPT) has biased composition (polar residues). 2 disordered regions span residues 1–69 (MKYA…QSQP) and 329–370 (LCPA…GSSS). 2 stretches are compositionally biased toward low complexity: residues 44 to 69 (TPTATTTATYANGNPNPNANPSQSQP) and 329 to 338 (LCPASGSRSS). A phosphoserine mark is found at serine 564 and serine 575. Positions 583-763 (EFKPNYIKFH…KDLKFKLSKM (181 aa)) are interaction with cup. The 55-residue stretch at 600–654 (GIGLWLKSLRLHKYIELFKNMTYEEMLLITEDFLQSVGVTKGASHKLALCIEKLK) folds into the SAM domain. 2 disordered regions span residues 773–892 (HVKP…MQQM) and 944–972 (GSSDNLGLERNQQPQQQQRKLSGGVTSAE). Polar residues-rich tracts occupy residues 802–822 (NGSNDRINNRKNSNDMLNFSL) and 854–864 (HQPQYKSSSYP). Position 970 is a phosphoserine (serine 970).

It belongs to the SMAUG family. In terms of assembly, interacts with oskar (osk). Binds to the 3'-UTR of nos. Interacts with cup, which in turn recruits eIF4-E, leading to an indirect interaction between smg and eIF4-E that prevents mRNA translation.

The protein localises to the cytoplasm. Functionally, translation regulator that binds to the 3'-UTR of specific mRNAs such as nanos (nos) and prevent their translation. Prevents translation of unlocalized nos in the bulk cytoplasm via the recruitment of cup. The chain is Protein Smaug from Drosophila erecta (Fruit fly).